Here is a 288-residue protein sequence, read N- to C-terminus: Thymidylate synthase (288 aa).

DUMP is bound by residues arginine 21 and 150–151 (RR). Cysteine 170 (nucleophile) is an active-site residue. Residues 190–193 (RSGD), asparagine 201, and 231–233 (HIY) each bind dUMP. Aspartate 193 serves as a coordination point for (6R)-5,10-methylene-5,6,7,8-tetrahydrofolate. Alanine 287 provides a ligand contact to (6R)-5,10-methylene-5,6,7,8-tetrahydrofolate.

This sequence belongs to the thymidylate synthase family. Bacterial-type ThyA subfamily. In terms of assembly, homodimer.

The protein resides in the cytoplasm. It carries out the reaction dUMP + (6R)-5,10-methylene-5,6,7,8-tetrahydrofolate = 7,8-dihydrofolate + dTMP. The protein operates within pyrimidine metabolism; dTTP biosynthesis. Its function is as follows. Catalyzes the reductive methylation of 2'-deoxyuridine-5'-monophosphate (dUMP) to 2'-deoxythymidine-5'-monophosphate (dTMP) while utilizing 5,10-methylenetetrahydrofolate (mTHF) as the methyl donor and reductant in the reaction, yielding dihydrofolate (DHF) as a by-product. This enzymatic reaction provides an intracellular de novo source of dTMP, an essential precursor for DNA biosynthesis. The sequence is that of Thymidylate synthase from Acholeplasma laidlawii (strain PG-8A).